We begin with the raw amino-acid sequence, 633 residues long: Heterogeneous nuclear ribonucleoprotein R (633 aa).

Residues 1–24 are disordered; it reads MANQVNGNAVQLKEEEEPMDTSSV. Alanine 2 is subject to N-acetylalanine. Residues lysine 13 and lysine 171 each participate in a glycyl lysine isopeptide (Lys-Gly) (interchain with G-Cter in SUMO2) cross-link. RRM domains lie at 165 to 244, 246 to 328, and 341 to 411; these read TEVF…ISVA, NRLF…WADP, and KVLF…LAKP. Lysine 359 participates in a covalent cross-link: Glycyl lysine isopeptide (Lys-Gly) (interchain with G-Cter in SUMO2). Position 366 is an N6-acetyllysine (lysine 366). The Nuclear localization signal motif lies at 412-418; the sequence is PDKKRKE. The interval 412–456 is disordered; sequence PDKKRKERQAARQASRSTAYEDYYYHPPPRMPPPIRGRGRGGGRG. A compositionally biased stretch (pro residues) spans 437 to 446; the sequence is HPPPRMPPPI. An RNA-binding RGG-box region spans residues 447-567; sequence RGRGRGGGRG…SRGSRGNRGG (121 aa). The stretch at 462-471 is one 1; approximate repeat; that stretch reads PDYYGYEDYY. The 3 X 11 AA approximate repeats of D-D-Y-Y-G-Y-D-Y-H-D-Y stretch occupies residues 462–497; it reads PDYYGYEDYYDDYYGYDYHDYRGGYEDPYYGYDDGY. The stretch at 472-482 is repeat 2; it reads DDYYGYDYHDY. The stretch at 488–497 is one 3; approximate repeat; the sequence is DPYYGYDDGY. A compositionally biased stretch (gly residues) spans 501-510; that stretch reads GRGGGRGGRG. Residues 501-633 are disordered; it reads GRGGGRGGRG…YQDTYGQQWK (133 aa). The span at 511–524 shows a compositional bias: pro residues; it reads APPPPRGRGAPPPR. Positions 525-541 are enriched in low complexity; sequence GRAGYSQRGAPLGPPRG. Residues 558–570 are compositionally biased toward gly residues; that stretch reads SRGSRGNRGGNVG. Polar residues predominate over residues 588-604; that stretch reads TNNQQNWGSQPIAQQPL. Low complexity predominate over residues 605–621; the sequence is QQGGDYSGNYGYNNDNQ. Residues 622-633 are compositionally biased toward polar residues; sequence EFYQDTYGQQWK.

In terms of assembly, identified in the spliceosome C complex. Identified in a IGF2BP1-dependent mRNP granule complex containing untranslated mRNAs. Interacts with GTPBP1.

The protein localises to the nucleus. It localises to the microsome. Its subcellular location is the nucleoplasm. It is found in the cytoplasm. In terms of biological role, component of ribonucleosomes, which are complexes of at least 20 other different heterogeneous nuclear ribonucleoproteins (hnRNP). hnRNP play an important role in processing of precursor mRNA in the nucleus. This Homo sapiens (Human) protein is Heterogeneous nuclear ribonucleoprotein R (HNRNPR).